Here is a 211-residue protein sequence, read N- to C-terminus: Peptide methionine sulfoxide reductase MsrA (211 aa).

C60 is an active-site residue.

It belongs to the MsrA Met sulfoxide reductase family.

It catalyses the reaction L-methionyl-[protein] + [thioredoxin]-disulfide + H2O = L-methionyl-(S)-S-oxide-[protein] + [thioredoxin]-dithiol. It carries out the reaction [thioredoxin]-disulfide + L-methionine + H2O = L-methionine (S)-S-oxide + [thioredoxin]-dithiol. Functionally, has an important function as a repair enzyme for proteins that have been inactivated by oxidation. Catalyzes the reversible oxidation-reduction of methionine sulfoxide in proteins to methionine. This Methanosarcina mazei (strain ATCC BAA-159 / DSM 3647 / Goe1 / Go1 / JCM 11833 / OCM 88) (Methanosarcina frisia) protein is Peptide methionine sulfoxide reductase MsrA.